The following is a 198-amino-acid chain: Translation initiation factor IF-3 (198 aa).

The segment at 168-198 (SLAPKKAGSPKKAETDTAKKENPKKAVETKE) is disordered. Over residues 178-198 (KKAETDTAKKENPKKAVETKE) the composition is skewed to basic and acidic residues.

Belongs to the IF-3 family. As to quaternary structure, monomer.

Its subcellular location is the cytoplasm. In terms of biological role, IF-3 binds to the 30S ribosomal subunit and shifts the equilibrium between 70S ribosomes and their 50S and 30S subunits in favor of the free subunits, thus enhancing the availability of 30S subunits on which protein synthesis initiation begins. This chain is Translation initiation factor IF-3, found in Phocaeicola vulgatus (strain ATCC 8482 / DSM 1447 / JCM 5826 / CCUG 4940 / NBRC 14291 / NCTC 11154) (Bacteroides vulgatus).